The following is a 774-amino-acid chain: E3 ubiquitin-protein ligase RFWD3 (774 aa).

Disordered regions lie at residues 32–126 (GTIE…TAGA) and 203–281 (PYPL…SAME). Phosphoserine; by ATM and ATR is present on residues Ser59 and Ser75. Positions 92–103 (LTEEVQPSEENM) are enriched in acidic residues. Residues 108-121 (PGTSEEPSQGSGAN) show a composition bias toward polar residues. Residues 223 to 242 (SDSDGSAEDEEVVVQAEEPE) are compositionally biased toward acidic residues. The RING-type; degenerate zinc-finger motif lies at 288-332 (CTICLEQWTNAGDHRISALRCGHLFGFRCISKWLKGQTRKCPQCN). Residues 358 to 403 (RMKSDLLNEQMLRKQAELESAQCRLQLQVLIDKCTKLNSRVQDLEK) adopt a coiled-coil conformation. WD repeat units follow at residues 493 to 535 (IPMH…VVQT), 536 to 568 (YNTG…LIYD), and 583 to 628 (KARC…SHKP).

In terms of assembly, interacts with MDM2 and p53/TP53. Binds to the RPA complex via direct interaction with RPA2. Interacts with RAD51. Phosphorylated at Ser-59 and Ser-75 upon DNA damage by ATM or ATR. ATM phosphorylation occurs at early times upon DNA damage, while ATR is the major kinase at later times. Phosphorylation by ATM and ATR is required to stabilize p53/TP53. Part of the phosphorylation depends upon RPA2 presence.

The protein localises to the nucleus. It localises to the PML body. The protein resides in the cytoplasm. The catalysed reaction is S-ubiquitinyl-[E2 ubiquitin-conjugating enzyme]-L-cysteine + [acceptor protein]-L-lysine = [E2 ubiquitin-conjugating enzyme]-L-cysteine + N(6)-ubiquitinyl-[acceptor protein]-L-lysine.. It participates in protein modification; protein ubiquitination. In terms of biological role, E3 ubiquitin-protein ligase required for the repair of DNA interstrand cross-links (ICL) in response to DNA damage. Plays a key role in RPA-mediated DNA damage signaling and repair. Acts by mediating ubiquitination of the RPA complex (RPA1, RPA2 and RPA3 subunits) and RAD51 at stalled replication forks, leading to remove them from DNA damage sites and promote homologous recombination. Also mediates the ubiquitination of p53/TP53 in the late response to DNA damage, and acts as a positive regulator of p53/TP53 stability, thereby regulating the G1/S DNA damage checkpoint. May act by catalyzing the formation of short polyubiquitin chains on p53/TP53 that are not targeted to the proteasome. In response to ionizing radiation, interacts with MDM2 and enhances p53/TP53 ubiquitination, possibly by restricting MDM2 from extending polyubiquitin chains on ubiquitinated p53/TP53. Required to translesion DNA synthesis across DNA-protein cross-link adducts by catalyzing ubiquitination of proteins on single-stranded DNA (ssDNA). This Mus musculus (Mouse) protein is E3 ubiquitin-protein ligase RFWD3 (Rfwd3).